Here is a 982-residue protein sequence, read N- to C-terminus: Glycine dehydrogenase (decarboxylating) (982 aa).

An N6-(pyridoxal phosphate)lysine modification is found at lysine 729.

Belongs to the GcvP family. In terms of assembly, the glycine cleavage system is composed of four proteins: P, T, L and H. Pyridoxal 5'-phosphate is required as a cofactor.

The catalysed reaction is N(6)-[(R)-lipoyl]-L-lysyl-[glycine-cleavage complex H protein] + glycine + H(+) = N(6)-[(R)-S(8)-aminomethyldihydrolipoyl]-L-lysyl-[glycine-cleavage complex H protein] + CO2. Its function is as follows. The glycine cleavage system catalyzes the degradation of glycine. The P protein binds the alpha-amino group of glycine through its pyridoxal phosphate cofactor; CO(2) is released and the remaining methylamine moiety is then transferred to the lipoamide cofactor of the H protein. This is Glycine dehydrogenase (decarboxylating) from Ralstonia nicotianae (strain ATCC BAA-1114 / GMI1000) (Ralstonia solanacearum).